We begin with the raw amino-acid sequence, 394 residues long: MPRYCAAICCKNRRGRNNKERKLSFYPFPLHDKERLEKWLKNMKRDSWVPSKYQFLCSDHFTPDSLDIRWGIRYLKQTAIPTIFALPEDNQEKDPSKKKSQKKKLKSEKEVCLKAKSEESFASNEPKKHPVNTDLLPEHAELLESSALVKPPDPKAESVQNNILTLSLVKQGTRKPESILETSVNQDMGIGGFHTSFENLSSTTITLTTASSEGIQQPLETQEVIEITTNHLANPHFTNNSVEIKSAQENPFILSTVTQTVEELNTDKESVIAIFVPTENSKPAINSFIPAPKTVEMEEDIDIEDSYKDVDYETEVLQIEHSYCRQDVNKEHLWQKVSKLHSKITLLELQEQQTLGRLKSLEALIRQLKQENWLSEENVKIIENHFTTYEVTMI.

The THAP-type zinc finger occupies 1 to 84 (MPRYCAAICC…LKQTAIPTIF (84 aa)). Residues 86–109 (LPEDNQEKDPSKKKSQKKKLKSEK) are disordered. The short motif at 320 to 323 (EHSY) is the HCFC1-binding motif (HBM) element. Residues 347–381 (LELQEQQTLGRLKSLEALIRQLKQENWLSEENVKI) adopt a coiled-coil conformation.

As to quaternary structure, interacts with HTRA2; under apoptotic conditions. Interacts with ABRAXAS2. Post-translationally, cleaved by HTRA2 during apoptosis.

Its subcellular location is the nucleus. Has sequence-specific DNA-binding activity and can function as transcriptional repressor (in vitro). May be a regulator of cell cycle: THAP5 overexpression in human cell lines causes cell cycle arrest at G2/M phase. The sequence is that of THAP domain-containing protein 5 (THAP5) from Bos taurus (Bovine).